Here is a 552-residue protein sequence, read N- to C-terminus: Asparagine--tRNA ligase, cytoplasmic (552 aa).

The disordered stretch occupies residues 1 to 23 (MSQVYVNEKTGADSTDVSGSEQQ). The segment covering 12 to 23 (ADSTDVSGSEQQ) has biased composition (polar residues).

This sequence belongs to the class-II aminoacyl-tRNA synthetase family.

Its subcellular location is the cytoplasm. It catalyses the reaction tRNA(Asn) + L-asparagine + ATP = L-asparaginyl-tRNA(Asn) + AMP + diphosphate + H(+). The chain is Asparagine--tRNA ligase, cytoplasmic (DED81) from Debaryomyces hansenii (strain ATCC 36239 / CBS 767 / BCRC 21394 / JCM 1990 / NBRC 0083 / IGC 2968) (Yeast).